A 315-amino-acid polypeptide reads, in one-letter code: 3-chlorobenzoate-3,4-dioxygenase reductase subunit (315 aa).

An FMN-binding site is contributed by 1 to 103; it reads MVAIDQHDTY…GATTRISAPR (103 aa). The region spanning 7 to 109 is the FAD-binding FR-type domain; sequence HDTYSVRVIS…SAPRNAFALD (103 aa). One can recognise a 2Fe-2S ferredoxin-type domain in the interval 228–315; sequence NEFTVNLARS…ALSPELTLDL (88 aa). Positions 264, 269, 272, and 302 each coordinate [2Fe-2S] cluster.

This sequence belongs to the PDR/VanB family. As to quaternary structure, this dioxygenase system consists of two proteins: phthalate oxygenase and phthalate oxygenase reductase. It depends on FMN as a cofactor.

The protein is 3-chlorobenzoate-3,4-dioxygenase reductase subunit (cbaB) of Comamonas testosteroni (Pseudomonas testosteroni).